Consider the following 306-residue polypeptide: Phospho-N-acetylmuramoyl-pentapeptide-transferase (306 aa).

A run of 10 helical transmembrane segments spans residues methionine 1–proline 21, glycine 49–leucine 69, leucine 75–valine 95, alanine 104–glutamine 124, isoleucine 130–glycine 150, glycine 160–serine 180, serine 182–tyrosine 202, valine 209–methionine 229, leucine 234–valine 254, and isoleucine 284–leucine 304.

This sequence belongs to the glycosyltransferase 4 family. MraY subfamily. Requires Mg(2+) as cofactor.

The protein localises to the cell inner membrane. The catalysed reaction is UDP-N-acetyl-alpha-D-muramoyl-L-alanyl-gamma-D-glutamyl-meso-2,6-diaminopimeloyl-D-alanyl-D-alanine + di-trans,octa-cis-undecaprenyl phosphate = di-trans,octa-cis-undecaprenyl diphospho-N-acetyl-alpha-D-muramoyl-L-alanyl-D-glutamyl-meso-2,6-diaminopimeloyl-D-alanyl-D-alanine + UMP. It functions in the pathway cell wall biogenesis; peptidoglycan biosynthesis. In terms of biological role, catalyzes the initial step of the lipid cycle reactions in the biosynthesis of the cell wall peptidoglycan: transfers peptidoglycan precursor phospho-MurNAc-pentapeptide from UDP-MurNAc-pentapeptide onto the lipid carrier undecaprenyl phosphate, yielding undecaprenyl-pyrophosphoryl-MurNAc-pentapeptide, known as lipid I. This chain is Phospho-N-acetylmuramoyl-pentapeptide-transferase, found in Fervidobacterium nodosum (strain ATCC 35602 / DSM 5306 / Rt17-B1).